A 498-amino-acid chain; its full sequence is MGQIVTMFEALPHIIDEVINIVIIVLIVITGIKAVYNFATCGIFALISFLLLAGRSCGMYGLKGPDIYKGVYQFKSVEFDMSHLNLTMPNACSANNSHHYISMGTSGLELTFTNDSIISHNFCNLTSAFNKKTFDHTLMSIVSSLHLSIRGNSNYKAVSCDFNNGITIQYNLTFSDAQSAQSQCRTFRGRVLDMFRTAFGGKYMRSGWGWTGSDGKTTWCSQTSYQYLIIQNRTWENHCTYAGPFGMSRILLSQEKTKFFTRRLAGTFTWTLSDSSGVENPGGYCLTKWMILAAELKCFGNTAVAKCNVNHDAEFCDMLRLIDYNKAALSKFKEDVESALHLFKTTVNSLISDQLLMRNHLRDLMGVPYCNYSKFWYLEHAKTGETSVPKCWLVTNGSYLNETHFSDQIEQEADNMITEMLRKDYIKRQGSTPLALMDLLMFSTSAYLVSIFLHLVKIPTHRHIKGGSCPKPHRLTNKGICSCGAFKVPGVKTVWKRR.

Gly2 carries N-myristoyl glycine; by host lipidation. Residues 2–17 (GQIVTMFEALPHIIDE) lie on the Extracellular side of the membrane. A helical transmembrane segment spans residues 18–33 (VINIVIIVLIVITGIK). The Cytoplasmic segment spans residues 34-58 (AVYNFATCGIFALISFLLLAGRSCG). Cys57 is a Zn(2+) binding site. The Extracellular segment spans residues 59 to 438 (MYGLKGPDIY…QGSTPLALMD (380 aa)). Asn85, Asn95, Asn114, Asn124, and Asn171 each carry an N-linked (GlcNAc...) asparagine; by host glycan. 6 disulfide bridges follow: Cys92–Cys239, Cys123–Cys160, Cys184–Cys220, Cys285–Cys298, Cys307–Cys316, and Cys370–Cys391. An N-linked (GlcNAc...) asparagine; by host glycan is attached at Asn232. N-linked (GlcNAc...) asparagine; by host glycans are attached at residues Asn371, Asn396, and Asn401. A helical membrane pass occupies residues 439–459 (LLMFSTSAYLVSIFLHLVKIP). Topologically, residues 460–498 (THRHIKGGSCPKPHRLTNKGICSCGAFKVPGVKTVWKRR) are cytoplasmic. 6 residues coordinate Zn(2+): His461, His463, Cys469, His473, Cys481, and Cys483.

This sequence belongs to the arenaviridae GPC protein family. Interacts with glycoprotein G2. Part of the GP complex (GP-C) together with glycoprotein G1 and glycoprotein G2. The GP-complex interacts with protein Z, which interacts with ribonucleocapsid; these interactions may induce virion budding. As to quaternary structure, homotrimer; disulfide-linked. In pre-fusion state, G1 homotrimers bind G2 homotrimers via ionic interactions. Part of the GP complex (GP-C) together with glycoprotein G2 and the stable signal peptide. Interacts with the primary host receptor DAG1 on the cell surface. The GP-complex interacts with protein Z, which interacts with ribonucleocapsid; these interactions may induce virion budding. In terms of assembly, homotrimer. Interacts with the stable signal peptide. In pre-fusion state, G2 homotrimers bind G1 homotrimers via ionic interactions. Part of the GP complex (GP-C) together with glycoprotein G1 and the stable signal peptide. Acidification in the endosome triggers rearrangements, which ultimately leads to a 6 helix bundle formed by the two heptad repeat domains (HR1 and HR2) in post-fusion state. The GP-complex interacts with protein Z, which interacts with ribonucleocapsid; these interactions may induce virion budding. Post-translationally, specific enzymatic cleavages in vivo yield mature proteins. GP-C polyprotein is cleaved in the endoplasmic reticulum by the host protease MBTPS1. Only cleaved glycoprotein is incorporated into virions. The SSP remains stably associated with the GP complex following cleavage by signal peptidase and plays crucial roles in the trafficking of GP through the secretory pathway. In terms of processing, myristoylation is necessary for GP2-mediated fusion activity. Inhibition of host myristoylation by the compound DDD85646 leads to the abrogation of GP2-mediated fusion upon exposure to low pH and inhibition of viral multiplication.

The protein localises to the virion membrane. It is found in the host endoplasmic reticulum membrane. The protein resides in the host Golgi apparatus membrane. Its subcellular location is the host cell membrane. In terms of biological role, functions as a cleaved signal peptide that is retained as the third component of the GP complex (GP-C). Helps to stabilize the spike complex in its native conformation. The SSP is required for efficient glycoprotein expression, post-translational maturation cleavage of G1 and G2, glycoprotein transport to the cell surface plasma membrane, formation of infectious virus particles, and acid pH-dependent glycoprotein-mediated cell fusion. Forms the virion spikes together with glycoprotein G2. The glycoprotein spike trimers are connected to the underlying matrix. Interacts with the host receptor. Mediates virus attachment to the host primary receptor alpha-dystroglycan DAG1 (alpha-DG) at the cell surface. Down-modulates host DAG1. Functionally, forms the virion spikes together with glycoprotein G1. The glycoprotein spike trimers are connected to the underlying matrix. Class I viral fusion protein that directs fusion of viral and host endosomal membranes, leading to delivery of the nucleocapsid into the cytoplasm. Membrane fusion is mediated by irreversible conformational changes induced by acidification. In Homo sapiens (Human), this protein is Pre-glycoprotein polyprotein GP complex.